The primary structure comprises 354 residues: tRNA N6-adenosine threonylcarbamoyltransferase (354 aa).

Fe cation-binding residues include histidine 115 and histidine 119. Substrate-binding positions include 138 to 142 (LVSGG), aspartate 171, glycine 184, and asparagine 285. Fe cation is bound at residue aspartate 313.

The protein belongs to the KAE1 / TsaD family. The cofactor is Fe(2+).

Its subcellular location is the cytoplasm. It catalyses the reaction L-threonylcarbamoyladenylate + adenosine(37) in tRNA = N(6)-L-threonylcarbamoyladenosine(37) in tRNA + AMP + H(+). Required for the formation of a threonylcarbamoyl group on adenosine at position 37 (t(6)A37) in tRNAs that read codons beginning with adenine. Is involved in the transfer of the threonylcarbamoyl moiety of threonylcarbamoyl-AMP (TC-AMP) to the N6 group of A37, together with TsaE and TsaB. TsaD likely plays a direct catalytic role in this reaction. The protein is tRNA N6-adenosine threonylcarbamoyltransferase of Albidiferax ferrireducens (strain ATCC BAA-621 / DSM 15236 / T118) (Rhodoferax ferrireducens).